Reading from the N-terminus, the 851-residue chain is MEGDTRRMWTQSESESIRSSKVRPLPLRKVTLYLTFVLIGVADTTYLDHAGTTLYAKSLIESFSRELTSNLFGNPHSLSASSQLSTRRVDDVRLRALRFFKADPDEFDLVFVANATAAIKLVADGMRDSTRQGFWYGYHVDAHTSLVGVRELAEKGGRCFTSDDEVEDWISKLCDVRSESLKLFAYPAQSNMNGRRLPLSWCKKIRNQGETAGGNVYTLLDAASLVSTSTLDLSDAAAAPDFTVLSFYKIFGFPDLGALIVRKSAGQIFEHRRYFGGGTVDMVLTRGLQWHAKKQSSIHDRLEDGTLPFHDIIALDSAFATHERLFGSMQNISSHTRFLAKRLYDRLNALRHFNGQRVCELYKSPRSDYNQPSTQGPIIAFNLRNSQGSWIGKSEVERLAAMRNIQIRSGSLCNPGGTSGSLGWTGADLLQQFSAGLRCGDDHDVMDGRPTGVLRLSLGAMTNLEDINTFVEFVEEFYVEKVATMDSLVTPVHSVPLQQPRFYIESLSLYPIKSCGPFRVPDGRRWEVRREGLAWDREWCLIHQGTGAALNQKKYPRMALIRPSIDLDRNVLRVTCEEPGSTNQKLLEVSLLREDTELATTSLCQRTSKASTVCGDQVTVQAYTSPSVAQFFSDFLGVPCTLARFGPHSSTRYASPRKAPGAWKQYLRKFVMPGSFPQEPSPPPAEKNPILLSNESPILLISRSSVNHLNENIKANQKRNRTGTSKAVAADVFRANIVVAESLADSPKVEQPYIEDQWEALKIGPGELQFDVLGSCQRCSMVCIDQFTGVRRDEPFSTLAKTRKINNKIVFGRHCSLSASEVTKEQHDNAERWTLMVGDIVTPSYAHDYDL.

Lysine 249 carries the N6-(pyridoxal phosphate)lysine modification. Cysteine 413 is an active-site residue. Residues 665–844 (QYLRKFVMPG…LMVGDIVTPS (180 aa)) form the MOSC domain.

The protein belongs to the class-V pyridoxal-phosphate-dependent aminotransferase family. MOCOS subfamily. Requires pyridoxal 5'-phosphate as cofactor.

The enzyme catalyses Mo-molybdopterin + L-cysteine + AH2 = thio-Mo-molybdopterin + L-alanine + A + H2O. It functions in the pathway cofactor biosynthesis; molybdopterin biosynthesis. Sulfurates the molybdenum cofactor. Sulfation of molybdenum is essential for xanthine dehydrogenase (XDH) and aldehyde oxidase (ADO) enzymes in which molybdenum cofactor is liganded by 1 oxygen and 1 sulfur atom in active form. In Neosartorya fischeri (strain ATCC 1020 / DSM 3700 / CBS 544.65 / FGSC A1164 / JCM 1740 / NRRL 181 / WB 181) (Aspergillus fischerianus), this protein is Molybdenum cofactor sulfurase.